The primary structure comprises 588 residues: Autophagy-related protein 22-1 (588 aa).

The helical transmembrane segment at 35 to 55 (YGWAAEVFTVCAMGSFLPITL) threads the bilayer. Asn-84 carries an N-linked (GlcNAc...) asparagine glycan. 3 consecutive transmembrane segments (helical) span residues 109–129 (TASF…ILII), 144–164 (LLVS…AVTP), and 168–188 (LLGG…FVLL). Asn-255 carries an N-linked (GlcNAc...) asparagine glycan. Helical transmembrane passes span 270-290 (GIGI…LVIV), 301-321 (LVLF…AFWL), 365-385 (ILLF…VSGT), 399-419 (AALG…AFSW), 434-454 (IIAC…GFIP), 471-493 (FPLG…SFFG), 507-527 (LYAI…GFIT), and 536-556 (AFFF…LVDA).

It belongs to the ATG22 family.

It is found in the vacuole membrane. Functionally, vacuolar effluxer which mediate the efflux of amino acids resulting from autophagic degradation. The release of autophagic amino acids allows the maintenance of protein synthesis and viability during nitrogen starvation. The sequence is that of Autophagy-related protein 22-1 (atg22-1) from Emericella nidulans (strain FGSC A4 / ATCC 38163 / CBS 112.46 / NRRL 194 / M139) (Aspergillus nidulans).